We begin with the raw amino-acid sequence, 93 residues long: Antitoxin RelF (93 aa).

This sequence belongs to the phD/YefM antitoxin family. Interacts with toxin RelG, which neutralizes the toxin. Also interacts with toxins RelE and RelK in vitro, in M.smegmatis coexpression with non-cognate toxins increases the toxicity of RelE but not of RelK.

Functionally, antitoxin component of a type II toxin-antitoxin (TA) system. Upon expression in M.smegmatis neutralizes the effect of toxin RelE2. Induces its own promoter, in combination with RelG represses its own promoter. Has been seen to bind DNA in complex with toxin RelG but not alone. The chain is Antitoxin RelF (relF) from Mycobacterium tuberculosis (strain ATCC 25618 / H37Rv).